Reading from the N-terminus, the 356-residue chain is Guanine nucleotide-binding protein alpha-15 subunit (356 aa).

Gly-2 is lipidated: N-myristoyl glycine. The S-palmitoyl cysteine moiety is linked to residue Cys-5. The region spanning 33–356 (GNQKLLLLGT…GRNLRGTGME (324 aa)) is the G-alpha domain. Residues 36 to 49 (KLLLLGTGECGKST) form a G1 motif region. Residues 41–48 (GTGECGKS), 177–183 (LRIRIPT), 202–206 (DVGGQ), 271–274 (NKRD), and Ala-328 contribute to the GTP site. Mg(2+) is bound by residues Ser-48 and Thr-183. The interval 175 to 183 (DMLRIRIPT) is G2 motif. Residues 198 to 207 (FRIFDVGGQR) are G3 motif. Residues 267–274 (ILFLNKRD) are G4 motif. The segment at 326-331 (TCATDT) is G5 motif.

This sequence belongs to the G-alpha family. In terms of assembly, g proteins are composed of 3 units; alpha, beta and gamma. The alpha chain contains the guanine nucleotide binding site.

Functionally, guanine nucleotide-binding proteins (G proteins) are involved as modulators or transducers in various transmembrane signaling systems. The polypeptide is Guanine nucleotide-binding protein alpha-15 subunit (gpa-15) (Caenorhabditis briggsae).